Reading from the N-terminus, the 247-residue chain is MASLSRPSLPSCLCSFLLLLLLQVSSSYAGQFRVIGPRQPIRALVGDEVELPCRISPGKNATGMEVGWYRPPFSRVVHLYRNGRDQDGEQAPEYRGRTELLKDAIGEGKVTLRIRNVRFSDEGGFTCFFRDHSYQEEAAIELKVEDPFYWVSPAVLVLLAVLPVLLLQITVGLVFLCLQYRLRGKLRAEIENLHRTFDPHFLRVPCWKITLFVIVPVLGPLVALIICYNWLHRRLAGQFLEELRNPF.

The first 29 residues, 1 to 29 (MASLSRPSLPSCLCSFLLLLLLQVSSSYA), serve as a signal peptide directing secretion. The Extracellular portion of the chain corresponds to 30 to 154 (GQFRVIGPRQ…EDPFYWVSPA (125 aa)). The 115-residue stretch at 31–145 (QFRVIGPRQP…EEAAIELKVE (115 aa)) folds into the Ig-like V-type domain. A disulfide bridge connects residues cysteine 53 and cysteine 127. The N-linked (GlcNAc...) asparagine glycan is linked to asparagine 60. Residues 155–175 (VLVLLAVLPVLLLQITVGLVF) traverse the membrane as a helical segment. The Cytoplasmic segment spans residues 176 to 210 (LCLQYRLRGKLRAEIENLHRTFDPHFLRVPCWKIT). Residues 211-231 (LFVIVPVLGPLVALIICYNWL) form a helical membrane-spanning segment. Residues 232–247 (HRRLAGQFLEELRNPF) are Extracellular-facing.

This sequence belongs to the immunoglobulin superfamily. BTN/MOG family. Homodimer.

The protein resides in the membrane. In terms of biological role, minor component of the myelin sheath. May be involved in completion and/or maintenance of the myelin sheath and in cell-cell communication. Mediates homophilic cell-cell adhesion. The protein is Myelin-oligodendrocyte glycoprotein (MOG) of Macaca fascicularis (Crab-eating macaque).